A 143-amino-acid chain; its full sequence is Sporulation-specific cell division protein SsgB (143 aa).

Belongs to the SsgA family. As to quaternary structure, interacts with SsgA. Interacts with FtsZ (via N-terminus).

It localises to the cell septum. Its function is as follows. Involved in sporulation-specific cell division. Required for early stages of sporulation. Important in the process of growth cessation prior to sporulation-specific cell division. Recruits cell division protein FtsZ to the future septum sites and tethers the contractile ring structure (Z ring) to the cytoplasmic membrane during sporulation. Stimulates polymerization and filament length of FtsZ in vitro. The protein is Sporulation-specific cell division protein SsgB of Frankia casuarinae (strain DSM 45818 / CECT 9043 / HFP020203 / CcI3).